We begin with the raw amino-acid sequence, 37 residues long: Small ribosomal subunit protein uS19 (37 aa).

It belongs to the universal ribosomal protein uS19 family.

The polypeptide is Small ribosomal subunit protein uS19 (RPS15) (Helix lucorum (Snail)).